The following is a 625-amino-acid chain: Low affinity potassium transport system protein Kup (625 aa).

12 helical membrane-spanning segments follow: residues 15 to 35 (TIFS…IYII), 58 to 78 (IIFW…IVSI), 103 to 123 (FVIV…IIII), 140 to 160 (LSFE…LFFI), 171 to 191 (IFSF…LKGI), 218 to 238 (FFVF…YINI), 251 to 271 (LFFV…IILL), 282 to 302 (FLVP…ISII), 340 to 360 (IYIP…ISIF), 366 to 386 (LILI…FFSL), 396 to 416 (FKIL…FIFI), and 422 to 442 (IICG…IMIT).

Belongs to the HAK/KUP transporter (TC 2.A.72) family.

It is found in the cell membrane. The catalysed reaction is K(+)(in) + H(+)(in) = K(+)(out) + H(+)(out). Functionally, responsible for the low-affinity transport of potassium into the cell. Likely operates as a K(+):H(+) symporter. The sequence is that of Low affinity potassium transport system protein Kup from Wigglesworthia glossinidia brevipalpis.